The sequence spans 458 residues: Tyrosine phenol-lyase (458 aa).

Lys-258 is modified (N6-(pyridoxal phosphate)lysine).

It belongs to the beta-eliminating lyase family. Homotetramer. Requires pyridoxal 5'-phosphate as cofactor.

It carries out the reaction L-tyrosine + H2O = phenol + pyruvate + NH4(+). This is Tyrosine phenol-lyase (tpl) from Symbiobacterium sp. (strain SC-1).